The sequence spans 607 residues: Dihydroxy-acid dehydratase (607 aa).

A Mg(2+)-binding site is contributed by D81. Residue C122 coordinates [2Fe-2S] cluster. The Mg(2+) site is built by D123 and K124. K124 carries the post-translational modification N6-carboxylysine. Residue C195 coordinates [2Fe-2S] cluster. Position 489 (E489) interacts with Mg(2+). S515 (proton acceptor) is an active-site residue.

The protein belongs to the IlvD/Edd family. Homodimer. Requires [2Fe-2S] cluster as cofactor. It depends on Mg(2+) as a cofactor.

It carries out the reaction (2R)-2,3-dihydroxy-3-methylbutanoate = 3-methyl-2-oxobutanoate + H2O. The enzyme catalyses (2R,3R)-2,3-dihydroxy-3-methylpentanoate = (S)-3-methyl-2-oxopentanoate + H2O. It functions in the pathway amino-acid biosynthesis; L-isoleucine biosynthesis; L-isoleucine from 2-oxobutanoate: step 3/4. Its pathway is amino-acid biosynthesis; L-valine biosynthesis; L-valine from pyruvate: step 3/4. Its function is as follows. Functions in the biosynthesis of branched-chain amino acids. Catalyzes the dehydration of (2R,3R)-2,3-dihydroxy-3-methylpentanoate (2,3-dihydroxy-3-methylvalerate) into 2-oxo-3-methylpentanoate (2-oxo-3-methylvalerate) and of (2R)-2,3-dihydroxy-3-methylbutanoate (2,3-dihydroxyisovalerate) into 2-oxo-3-methylbutanoate (2-oxoisovalerate), the penultimate precursor to L-isoleucine and L-valine, respectively. This chain is Dihydroxy-acid dehydratase, found in Deinococcus radiodurans (strain ATCC 13939 / DSM 20539 / JCM 16871 / CCUG 27074 / LMG 4051 / NBRC 15346 / NCIMB 9279 / VKM B-1422 / R1).